The following is a 182-amino-acid chain: ATP-dependent protease subunit HslV (182 aa).

Threonine 12 is an active-site residue. Positions 167, 170, and 173 each coordinate Na(+).

Belongs to the peptidase T1B family. HslV subfamily. As to quaternary structure, a double ring-shaped homohexamer of HslV is capped on each side by a ring-shaped HslU homohexamer. The assembly of the HslU/HslV complex is dependent on binding of ATP.

It is found in the cytoplasm. It catalyses the reaction ATP-dependent cleavage of peptide bonds with broad specificity.. Allosterically activated by HslU binding. Its function is as follows. Protease subunit of a proteasome-like degradation complex believed to be a general protein degrading machinery. The sequence is that of ATP-dependent protease subunit HslV from Pelodictyon phaeoclathratiforme (strain DSM 5477 / BU-1).